Reading from the N-terminus, the 618-residue chain is Uptake hydrogenase large subunit (618 aa).

Cysteine 75, cysteine 78, cysteine 597, and cysteine 600 together coordinate Ni(2+).

This sequence belongs to the [NiFe]/[NiFeSe] hydrogenase large subunit family. Heterodimer of a large and a small subunit. Ni(2+) is required as a cofactor.

Its subcellular location is the cell membrane. It catalyses the reaction H2 + A = AH2. In terms of biological role, this enzyme recycles the H(2) produced by nitrogenase to increase the production of ATP and to protect nitrogenase against inhibition or damage by O(2) under carbon- or phosphate-limited conditions. In Rubrivivax gelatinosus (Rhodocyclus gelatinosus), this protein is Uptake hydrogenase large subunit (hupB).